The following is an 81-amino-acid chain: ATP synthase subunit c (81 aa).

Helical transmembrane passes span 7–27 (AASVLSAALAIGLGSLGPGLG) and 57–77 (LAFMEALTIYGLVVALVLLFA).

This sequence belongs to the ATPase C chain family. As to quaternary structure, F-type ATPases have 2 components, F(1) - the catalytic core - and F(0) - the membrane proton channel. F(1) has five subunits: alpha(3), beta(3), gamma(1), delta(1), epsilon(1). F(0) has four main subunits: a(1), b(1), b'(1) and c(10-14). The alpha and beta chains form an alternating ring which encloses part of the gamma chain. F(1) is attached to F(0) by a central stalk formed by the gamma and epsilon chains, while a peripheral stalk is formed by the delta, b and b' chains.

The protein localises to the cellular thylakoid membrane. Its function is as follows. F(1)F(0) ATP synthase produces ATP from ADP in the presence of a proton or sodium gradient. F-type ATPases consist of two structural domains, F(1) containing the extramembraneous catalytic core and F(0) containing the membrane proton channel, linked together by a central stalk and a peripheral stalk. During catalysis, ATP synthesis in the catalytic domain of F(1) is coupled via a rotary mechanism of the central stalk subunits to proton translocation. Key component of the F(0) channel; it plays a direct role in translocation across the membrane. A homomeric c-ring of between 10-14 subunits forms the central stalk rotor element with the F(1) delta and epsilon subunits. The polypeptide is ATP synthase subunit c (Synechococcus sp. (strain JA-3-3Ab) (Cyanobacteria bacterium Yellowstone A-Prime)).